Here is a 90-residue protein sequence, read N- to C-terminus: Probable Fe(2+)-trafficking protein (90 aa).

It belongs to the Fe(2+)-trafficking protein family.

In terms of biological role, could be a mediator in iron transactions between iron acquisition and iron-requiring processes, such as synthesis and/or repair of Fe-S clusters in biosynthetic enzymes. The polypeptide is Probable Fe(2+)-trafficking protein (Cupriavidus pinatubonensis (strain JMP 134 / LMG 1197) (Cupriavidus necator (strain JMP 134))).